Here is a 655-residue protein sequence, read N- to C-terminus: WD repeat-containing protein 70 (655 aa).

Disordered regions lie at residues 1 to 24 and 43 to 170; these read MEHSGPSEVTGADTAGPDPQLAVT and FEQT…PIHR. Residues 45 to 78 are compositionally biased toward basic and acidic residues; sequence QTRRTAVERSRKTLEAREKEEEMNREKELRKQLE. Over residues 99-112 the composition is skewed to low complexity; sequence RDTSSSDSDHSSGS. Positions 148-165 are enriched in acidic residues; sequence EEGEDDDDDDLEDEGEED. WD repeat units lie at residues 181–220, 228–269, 282–322, 331–370, 377–416, 422–467, and 470–509; these read HGTKTVSALGLDPSGARLVTGGYDYDVKFWDFAGMDASFK, CECH…ECIK, GHTA…KQKS, GKKVIPTTCTYSRDGNLVAAACQNGSIQIWDRNLTVHPKF, APGTDTSCVAFSYDGNVLASRGGDDTLKLWDVRQFNKPLF, PTLF…RVYE, and ITDASVVRCLWHPKLNQIMVGTGNGLAKVYYDPNKSQRGA. Lysine 297 is covalently cross-linked (Glycyl lysine isopeptide (Lys-Gly) (interchain with G-Cter in SUMO2)). Residue lysine 453 is modified to N6-acetyllysine. A compositionally biased stretch (basic and acidic residues) spans 541–566; sequence REPRQRSTRKQLEKDRLDPLKSHKPE. Residues 541–582 form a disordered region; the sequence is REPRQRSTRKQLEKDRLDPLKSHKPEPPVAGPGRGGRVGTHG. A compositionally biased stretch (gly residues) spans 572–582; sequence PGRGGRVGTHG. The residue at position 580 (threonine 580) is a Phosphothreonine. Residues lysine 591 and lysine 597 each participate in a glycyl lysine isopeptide (Lys-Gly) (interchain with G-Cter in SUMO2) cross-link. Residues serine 622 and serine 639 each carry the phosphoserine modification. The tract at residues 632–655 is disordered; sequence TMFAQVESDDEESKNEPEWKKRKI. The segment covering 645-655 has biased composition (basic and acidic residues); that stretch reads KNEPEWKKRKI.

Belongs to the WD repeat GAD-1 family.

The polypeptide is WD repeat-containing protein 70 (Wdr70) (Rattus norvegicus (Rat)).